Here is a 529-residue protein sequence, read N- to C-terminus: Peptide chain release factor 3 (529 aa).

The tr-type G domain maps to 11-280 (AKRRTFAIIS…GLIEWAPQPM (270 aa)). GTP-binding positions include 20-27 (SHPDAGKT), 88-92 (DTPGH), and 142-145 (NKLD).

It belongs to the TRAFAC class translation factor GTPase superfamily. Classic translation factor GTPase family. PrfC subfamily.

It localises to the cytoplasm. Functionally, increases the formation of ribosomal termination complexes and stimulates activities of RF-1 and RF-2. It binds guanine nucleotides and has strong preference for UGA stop codons. It may interact directly with the ribosome. The stimulation of RF-1 and RF-2 is significantly reduced by GTP and GDP, but not by GMP. The chain is Peptide chain release factor 3 from Enterobacter sp. (strain 638).